The primary structure comprises 1199 residues: DNA-directed RNA polymerase subunit beta (1199 aa).

Residues Glu-1177–Glu-1199 form a disordered region.

Belongs to the RNA polymerase beta chain family. As to quaternary structure, the RNAP catalytic core consists of 2 alpha, 1 beta, 1 beta' and 1 omega subunit. When a sigma factor is associated with the core the holoenzyme is formed, which can initiate transcription.

It carries out the reaction RNA(n) + a ribonucleoside 5'-triphosphate = RNA(n+1) + diphosphate. DNA-dependent RNA polymerase catalyzes the transcription of DNA into RNA using the four ribonucleoside triphosphates as substrates. In Ligilactobacillus salivarius (strain UCC118) (Lactobacillus salivarius), this protein is DNA-directed RNA polymerase subunit beta.